Here is a 400-residue protein sequence, read N- to C-terminus: Na(+)/H(+) antiporter NhaA (400 aa).

11 helical membrane passes run 26-46, 71-91, 107-127, 137-157, 166-186, 189-209, 225-245, 273-293, 299-319, 340-360, and 373-393; these read AGGILLLFSAVVAMLLANSPL, LIHWINDGFMAVFFVLVGMEV, IFPAIAAIGGMVIPAVVYWFI, GWAIPMATDIAFALGIMALLS, IFLLALAIIDDLGAIVVIALF, HGLSVQALIFSAVAIIVLILL, AILWASVLKSGVHATLAGVII, FVILPLFAFANAGVSFAGIDV, PLLLAIASGLIIGKPVGIFGF, IFAVAVLCGIGFTMSMFLASL, and LSRLGILLGSTVSAILGYLFL.

Belongs to the NhaA Na(+)/H(+) (TC 2.A.33) antiporter family.

It is found in the cell inner membrane. It catalyses the reaction Na(+)(in) + 2 H(+)(out) = Na(+)(out) + 2 H(+)(in). Functionally, na(+)/H(+) antiporter that extrudes sodium in exchange for external protons. This chain is Na(+)/H(+) antiporter NhaA, found in Haemophilus influenzae (strain ATCC 51907 / DSM 11121 / KW20 / Rd).